The sequence spans 350 residues: Dihydroorotate dehydrogenase (quinone) (350 aa).

Residues 61–65 and Thr-85 contribute to the FMN site; that span reads AGLDK. Lys-65 contributes to the substrate binding site. 110-114 contributes to the substrate binding site; that stretch reads NRMGF. FMN contacts are provided by Asn-139 and Asn-172. Asn-172 contacts substrate. Ser-175 acts as the Nucleophile in catalysis. Asn-177 is a binding site for substrate. 2 residues coordinate FMN: Lys-217 and Thr-245. 246–247 is a substrate binding site; it reads NT. FMN contacts are provided by residues Gly-268, Gly-297, and 318–319; that span reads YS.

Belongs to the dihydroorotate dehydrogenase family. Type 2 subfamily. In terms of assembly, monomer. The cofactor is FMN.

It localises to the cell membrane. It carries out the reaction (S)-dihydroorotate + a quinone = orotate + a quinol. It functions in the pathway pyrimidine metabolism; UMP biosynthesis via de novo pathway; orotate from (S)-dihydroorotate (quinone route): step 1/1. Functionally, catalyzes the conversion of dihydroorotate to orotate with quinone as electron acceptor. This Flavobacterium lutescens protein is Dihydroorotate dehydrogenase (quinone).